Here is a 257-residue protein sequence, read N- to C-terminus: MLLGVNIDHIAVLRQARMVNDPDLLEAAFIAAKYGDQITLHVREDRRHAQDFDLENIINFCKSPINLECALNDEILNLALKLKPHRVTLVPEKREELTTEGGLCLNHVKLKQSIEKLQNVNIEVSLFINPSLEDIEKSQILKAEFIELHTGHYANLHNALFSNISHTAFALKELDQDKKTLQTQFEKELQNLKLCAKKGTKLGLKVAAGHGLNYKNVKPIVKIKEICELNIGQSIVARSVFTGLQNAILEMKELIKR.

Asn6 contributes to the 3-amino-2-oxopropyl phosphate binding site. Residue Asp8–His9 participates in 1-deoxy-D-xylulose 5-phosphate binding. Arg17 is a 3-amino-2-oxopropyl phosphate binding site. The Proton acceptor role is filled by His41. 1-deoxy-D-xylulose 5-phosphate is bound by residues Arg43 and His48. The active-site Proton acceptor is the Glu68. Thr98 provides a ligand contact to 1-deoxy-D-xylulose 5-phosphate. The active-site Proton donor is His210. 3-amino-2-oxopropyl phosphate-binding positions include Gly211 and Gly232–Gln233.

The protein belongs to the PNP synthase family. Homooctamer; tetramer of dimers.

The protein localises to the cytoplasm. The catalysed reaction is 3-amino-2-oxopropyl phosphate + 1-deoxy-D-xylulose 5-phosphate = pyridoxine 5'-phosphate + phosphate + 2 H2O + H(+). It functions in the pathway cofactor biosynthesis; pyridoxine 5'-phosphate biosynthesis; pyridoxine 5'-phosphate from D-erythrose 4-phosphate: step 5/5. Catalyzes the complicated ring closure reaction between the two acyclic compounds 1-deoxy-D-xylulose-5-phosphate (DXP) and 3-amino-2-oxopropyl phosphate (1-amino-acetone-3-phosphate or AAP) to form pyridoxine 5'-phosphate (PNP) and inorganic phosphate. In Campylobacter jejuni subsp. doylei (strain ATCC BAA-1458 / RM4099 / 269.97), this protein is Pyridoxine 5'-phosphate synthase.